Consider the following 424-residue polypeptide: Imidazolonepropionase (424 aa).

Residues His81 and His83 each contribute to the Fe(3+) site. Zn(2+) contacts are provided by His81 and His83. 3 residues coordinate 4-imidazolone-5-propanoate: Arg90, Tyr153, and His186. Residue Tyr153 participates in N-formimidoyl-L-glutamate binding. Residue His251 coordinates Fe(3+). Residue His251 participates in Zn(2+) binding. Glu254 is a binding site for 4-imidazolone-5-propanoate. Position 325 (Asp325) interacts with Fe(3+). Residue Asp325 coordinates Zn(2+). Residues Asn327 and Gly329 each coordinate N-formimidoyl-L-glutamate. Position 330 (Thr330) interacts with 4-imidazolone-5-propanoate.

It belongs to the metallo-dependent hydrolases superfamily. HutI family. Requires Zn(2+) as cofactor. Fe(3+) serves as cofactor.

The protein localises to the cytoplasm. The catalysed reaction is 4-imidazolone-5-propanoate + H2O = N-formimidoyl-L-glutamate. It functions in the pathway amino-acid degradation; L-histidine degradation into L-glutamate; N-formimidoyl-L-glutamate from L-histidine: step 3/3. In terms of biological role, catalyzes the hydrolytic cleavage of the carbon-nitrogen bond in imidazolone-5-propanoate to yield N-formimidoyl-L-glutamate. It is the third step in the universal histidine degradation pathway. This chain is Imidazolonepropionase, found in Syntrophobacter fumaroxidans (strain DSM 10017 / MPOB).